We begin with the raw amino-acid sequence, 357 residues long: Phosphoribosylformylglycinamidine cyclo-ligase (357 aa).

This sequence belongs to the AIR synthase family.

The protein resides in the cytoplasm. It carries out the reaction 2-formamido-N(1)-(5-O-phospho-beta-D-ribosyl)acetamidine + ATP = 5-amino-1-(5-phospho-beta-D-ribosyl)imidazole + ADP + phosphate + H(+). The protein operates within purine metabolism; IMP biosynthesis via de novo pathway; 5-amino-1-(5-phospho-D-ribosyl)imidazole from N(2)-formyl-N(1)-(5-phospho-D-ribosyl)glycinamide: step 2/2. This is Phosphoribosylformylglycinamidine cyclo-ligase from Rhizobium etli (strain ATCC 51251 / DSM 11541 / JCM 21823 / NBRC 15573 / CFN 42).